Here is a 453-residue protein sequence, read N- to C-terminus: Cytochrome b-c1 complex subunit 2, mitochondrial (453 aa).

A mitochondrion-targeting transit peptide spans 1 to 14 (MKLLSRAGSFSRFY). N6-acetyllysine occurs at positions 66, 199, and 250. Phosphoserine is present on Ser-368.

The protein belongs to the peptidase M16 family. UQCRC2/QCR2 subfamily. In terms of assembly, component of the ubiquinol-cytochrome c oxidoreductase (cytochrome b-c1 complex, complex III, CIII), a multisubunit enzyme composed of 11 subunits. The complex is composed of 3 respiratory subunits cytochrome b, cytochrome c1 and Rieske protein UQCRFS1, 2 core protein subunits UQCRC1/QCR1 and UQCRC2/QCR2, and 6 low-molecular weight protein subunits UQCRH/QCR6, UQCRB/QCR7, UQCRQ/QCR8, UQCR10/QCR9, UQCR11/QCR10 and subunit 9, the cleavage product of Rieske protein UQCRFS1. The complex exists as an obligatory dimer and forms supercomplexes (SCs) in the inner mitochondrial membrane with NADH-ubiquinone oxidoreductase (complex I, CI) and cytochrome c oxidase (complex IV, CIV), resulting in different assemblies (supercomplex SCI(1)III(2)IV(1) and megacomplex MCI(2)III(2)IV(2)). Interacts with RAB5IF. Interacts with STMP1. In terms of processing, acetylation of Lys-159 and Lys-250 is observed in liver mitochondria from fasted mice but not from fed mice. In terms of tissue distribution, expressed in neurons and astrocytes of the cerebral cortex and hippocampus (at protein level).

The protein resides in the mitochondrion inner membrane. Component of the ubiquinol-cytochrome c oxidoreductase, a multisubunit transmembrane complex that is part of the mitochondrial electron transport chain which drives oxidative phosphorylation. The respiratory chain contains 3 multisubunit complexes succinate dehydrogenase (complex II, CII), ubiquinol-cytochrome c oxidoreductase (cytochrome b-c1 complex, complex III, CIII) and cytochrome c oxidase (complex IV, CIV), that cooperate to transfer electrons derived from NADH and succinate to molecular oxygen, creating an electrochemical gradient over the inner membrane that drives transmembrane transport and the ATP synthase. The cytochrome b-c1 complex catalyzes electron transfer from ubiquinol to cytochrome c, linking this redox reaction to translocation of protons across the mitochondrial inner membrane, with protons being carried across the membrane as hydrogens on the quinol. In the process called Q cycle, 2 protons are consumed from the matrix, 4 protons are released into the intermembrane space and 2 electrons are passed to cytochrome c. The 2 core subunits UQCRC1/QCR1 and UQCRC2/QCR2 are homologous to the 2 mitochondrial-processing peptidase (MPP) subunits beta-MPP and alpha-MPP respectively, and they seem to have preserved their MPP processing properties. May be involved in the in situ processing of UQCRFS1 into the mature Rieske protein and its mitochondrial targeting sequence (MTS)/subunit 9 when incorporated into complex III. This chain is Cytochrome b-c1 complex subunit 2, mitochondrial (Uqcrc2), found in Mus musculus (Mouse).